We begin with the raw amino-acid sequence, 84 residues long: Large ribosomal subunit protein bL27 (84 aa).

The disordered stretch occupies residues Met-1–Leu-21. Residues Ala-7–Gln-19 show a composition bias toward polar residues.

This sequence belongs to the bacterial ribosomal protein bL27 family.

This Clavibacter michiganensis subsp. michiganensis (strain NCPPB 382) protein is Large ribosomal subunit protein bL27.